The chain runs to 138 residues: Putative nickel-responsive regulator (138 aa).

Residues His-78, His-89, His-91, and Cys-97 each contribute to the Ni(2+) site.

Belongs to the transcriptional regulatory CopG/NikR family. The cofactor is Ni(2+).

In terms of biological role, transcriptional regulator. The protein is Putative nickel-responsive regulator of Pyrococcus horikoshii (strain ATCC 700860 / DSM 12428 / JCM 9974 / NBRC 100139 / OT-3).